The sequence spans 95 residues: MSFKFNAEVRSKQGKGASRRLRHNGQIPAIVYGGSEAPVSIVLNHDELNNAQIHDSFYSDTIILVIEGKEISVKVQAMQRHPFKPKLVHIDFKRV.

A disordered region spans residues 1–20 (MSFKFNAEVRSKQGKGASRR).

The protein belongs to the bacterial ribosomal protein bL25 family. Part of the 50S ribosomal subunit; part of the 5S rRNA/L5/L18/L25 subcomplex. Contacts the 5S rRNA. Binds to the 5S rRNA independently of L5 and L18.

Functionally, this is one of the proteins that binds to the 5S RNA in the ribosome where it forms part of the central protuberance. This Histophilus somni (strain 129Pt) (Haemophilus somnus) protein is Large ribosomal subunit protein bL25.